The primary structure comprises 148 residues: Ubiquitin-conjugating enzyme E2-16 kDa (148 aa).

Residues 2-148 enclose the UBC core domain; that stretch reads SSSKRIAKEL…AKEWTKKYAV (147 aa). At Ser12 the chain carries Phosphoserine. The active-site Glycyl thioester intermediate is the Cys86. Lys91 participates in a covalent cross-link: Glycyl lysine isopeptide (Lys-Gly) (interchain with G-Cter in ubiquitin).

The protein belongs to the ubiquitin-conjugating enzyme family. Component of the RSP5-UBA1-UBC5 ubiquitin ligase complex composed of E3 RSP5, E1 UBA1 and E2 UBC5. Post-translationally, the N-terminus is blocked.

It catalyses the reaction S-ubiquitinyl-[E1 ubiquitin-activating enzyme]-L-cysteine + [E2 ubiquitin-conjugating enzyme]-L-cysteine = [E1 ubiquitin-activating enzyme]-L-cysteine + S-ubiquitinyl-[E2 ubiquitin-conjugating enzyme]-L-cysteine.. Its pathway is protein modification; protein ubiquitination. Functionally, catalyzes the covalent attachment of ubiquitin to other proteins. Mediates the selective degradation of short-lived and abnormal proteins. The RSP5-UBA1-UBC5 ubiquitin ligase complex ubiquitinates RPO21 forming 'Lys-63'-linked polyubiquitin chains. This is Ubiquitin-conjugating enzyme E2-16 kDa (UBC5) from Saccharomyces cerevisiae (strain ATCC 204508 / S288c) (Baker's yeast).